Reading from the N-terminus, the 491-residue chain is Endoglucanase 14 (491 aa).

The N-terminal stretch at 1-31 (MSQLKIGSSQCLWTSICIVLFVLSMARGAVS) is a signal peptide. Asp86 (nucleophile) is an active-site residue. An N-linked (GlcNAc...) asparagine glycan is attached at Asn397. Catalysis depends on residues His413, Asp465, and Glu474.

Belongs to the glycosyl hydrolase 9 (cellulase E) family.

It localises to the secreted. The catalysed reaction is Endohydrolysis of (1-&gt;4)-beta-D-glucosidic linkages in cellulose, lichenin and cereal beta-D-glucans.. The chain is Endoglucanase 14 from Arabidopsis thaliana (Mouse-ear cress).